Here is a 79-residue protein sequence, read N- to C-terminus: MAKFASIITLLFAALVVFAAFEAPTMVEAKLCERSSGTWSGVCGNNNACKNQCIRLEGAQHGSCNYVFPAHKCICYFPC.

The N-terminal stretch at 1-29 (MAKFASIITLLFAALVVFAAFEAPTMVEA) is a signal peptide. 4 cysteine pairs are disulfide-bonded: Cys32-Cys79, Cys43-Cys64, Cys49-Cys73, and Cys53-Cys75.

This sequence belongs to the DEFL family.

It localises to the secreted. In terms of biological role, possesses antifungal activity sensitive to inorganic cations. In Brassica napus (Rape), this protein is Defensin-like protein 3 (AFP3).